Here is a 273-residue protein sequence, read N- to C-terminus: Eukaryotic translation initiation factor 3 subunit G-2 (273 aa).

Residues 193 to 271 (SAVRISNLSE…LILCVEWSKP (79 aa)) enclose the RRM domain.

It belongs to the eIF-3 subunit G family. As to quaternary structure, component of the eukaryotic translation initiation factor 3 (eIF-3) complex. The eIF-3 complex interacts with pix.

It localises to the cytoplasm. RNA-binding component of the eukaryotic translation initiation factor 3 (eIF-3) complex, which is involved in protein synthesis of a specialized repertoire of mRNAs and, together with other initiation factors, stimulates binding of mRNA and methionyl-tRNAi to the 40S ribosome. The eIF-3 complex specifically targets and initiates translation of a subset of mRNAs involved in cell proliferation. This subunit can bind 18S rRNA. The sequence is that of Eukaryotic translation initiation factor 3 subunit G-2 from Drosophila simulans (Fruit fly).